We begin with the raw amino-acid sequence, 227 residues long: UPF0758 protein Pcryo_2119 (227 aa).

The MPN domain maps to 102–224; sequence GLGRSQMVKD…TLSYAENSLP (123 aa). The Zn(2+) site is built by histidine 173, histidine 175, and aspartate 186. Residues 173–186 carry the JAMM motif motif; sequence HNHPHTDAKPSTAD.

This sequence belongs to the UPF0758 family.

The chain is UPF0758 protein Pcryo_2119 from Psychrobacter cryohalolentis (strain ATCC BAA-1226 / DSM 17306 / VKM B-2378 / K5).